We begin with the raw amino-acid sequence, 1157 residues long: ATP-dependent helicase/deoxyribonuclease subunit B (1157 aa).

Residues 1–278 form the UvrD-like helicase ATP-binding domain; that stretch reads MTLQIIAGRS…FFLENKRAKT (278 aa). Residue 8–15 participates in ATP binding; it reads GRSGTGKT. Positions 272-590 constitute a UvrD-like helicase C-terminal domain; that stretch reads ENKRAKTESL…VLSDMENAKL (319 aa). Cys-794, Cys-1115, Cys-1118, and Cys-1124 together coordinate [4Fe-4S] cluster.

Belongs to the helicase family. AddB/RexB type 1 subfamily. In terms of assembly, heterodimer of AddA and AddB. Mg(2+) serves as cofactor. Requires [4Fe-4S] cluster as cofactor.

Functionally, the heterodimer acts as both an ATP-dependent DNA helicase and an ATP-dependent, dual-direction single-stranded exonuclease. Recognizes the chi site generating a DNA molecule suitable for the initiation of homologous recombination. The AddB subunit has 5' -&gt; 3' nuclease activity but not helicase activity. In Listeria monocytogenes serotype 4a (strain HCC23), this protein is ATP-dependent helicase/deoxyribonuclease subunit B.